The following is a 2155-amino-acid chain: Alpha-tectorin (2155 aa).

Residues 1-24 (MNYSSLLRIWVSFIFALVRHQAQP) form the signal peptide. N-linked (GlcNAc...) asparagine glycans are attached at residues Asn-34, Asn-187, Asn-215, Asn-278, Asn-455, Asn-506, Asn-528, and Asn-560. In terms of domain architecture, NIDO spans 98-252 (PFWADVHNGI…GRWAFKVDGK (155 aa)). Residues 260 to 314 (CTSRGQFLRRGEVFWDDLNCTIKCRCLDFNNEIYCQEASCSPYEVCEPKGRFFYC) form the VWFC domain. The region spanning 320-500 (STCVVFGEPH…RVYHADWKCG (181 aa)) is the VWFD 1 domain. Disulfide bonds link Cys-322-Cys-461 and Cys-344-Cys-499. In terms of domain architecture, TIL 1 spans 597–650 (CPSFSHYSVCTSSCPDTCSDLTASQNCATPCTEGCECNEGFVLSTSQCVPLHKC). N-linked (GlcNAc...) asparagine glycans are attached at residues Asn-670, Asn-687, Asn-813, Asn-843, Asn-855, Asn-898, Asn-920, Asn-931, and Asn-949. The region spanning 711–886 (TVCLLSQNQV…SWTTFEEICN (176 aa)) is the VWFD 2 domain. Cys-713 and Cys-849 are oxidised to a cystine. Positions 984–1036 (CPENSHFEECMTCTETCETLALGPICVDSCSEGCQCDEGYALQGSQCVPRSEC) constitute a TIL 2 domain. Residues Asn-1048, Asn-1064, Asn-1235, and Asn-1364 are each glycosylated (N-linked (GlcNAc...) asparagine). Residues 1098 to 1278 (ASCIVSGYGH…SWVKRDTFCQ (181 aa)) enclose the VWFD 3 domain. 2 disulfide bridges follow: Cys-1100–Cys-1241 and Cys-1122–Cys-1277. The TIL 3 domain maps to 1372–1425 (CPPNSHYESCVSVCQPRCAAIRLKSDCNHYCVEGCQCDAGYVLNGKSCILPHNC). One can recognise a VWFD 4 domain in the interval 1485–1666 (SYCLAAGGGV…QKRPLAPSCN (182 aa)). Cystine bridges form between Cys-1487–Cys-1622, Cys-1509–Cys-1665, Cys-1717–Cys-1775, Cys-1741–Cys-1784, Cys-1786–Cys-1818, Cys-1806–Cys-1898, and Cys-1837–Cys-1857. 10 N-linked (GlcNAc...) asparagine glycosylation sites follow: Asn-1538, Asn-1565, Asn-1756, Asn-1772, Asn-1794, Asn-1851, Asn-1864, Asn-1880, Asn-1920, and Asn-1939. A ZP domain is found at 1805–2059 (TCKAAQMEVS…YSCKINCPQN (255 aa)). Intrachain disulfides connect Cys-1980-Cys-2040, Cys-2001-Cys-2056, and Cys-2045-Cys-2052. Asn-2091 carries the GPI-anchor amidated asparagine lipid modification. Residues 2092-2155 (GGCEQICTSR…HLIYKSGATS (64 aa)) constitute a propeptide, removed in mature form.

May form homomeric filament after self-association or heteromeric filament after association with beta-tectorin. Interacts with CEACAM16. Post-translationally, 3 products of tectorin seem to exist: HMM, MMM and LMM. They may be generated by active processing or the result of proteolysis occurring between intrachain disulfide bonds. In terms of processing, the presence of a hydrophobic C-terminus preceded by a potential cleavage site strongly suggests that tectorins are synthesized as glycosylphosphatidylinositol-linked, membrane-bound precursors. Tectorins are targeted to the apical surface of the inner ear epithelia by the lipid and proteolytically released into the extracellular compartment. As to expression, cochlea-specific.

It is found in the cell membrane. Its subcellular location is the secreted. The protein localises to the extracellular space. It localises to the extracellular matrix. In terms of biological role, one of the major non-collagenous components of the tectorial membrane. The tectorial membrane is an extracellular matrix of the inner ear that covers the neuroepithelium of the cochlea and contacts the stereocilia bundles of specialized sensory hair cells. Sound induces movement of these hair cells relative to the tectorial membrane, deflects the stereocilia and leads to fluctuations in hair-cell membrane potential, transducing sound into electrical signals. This Mus musculus (Mouse) protein is Alpha-tectorin (Tecta).